The chain runs to 430 residues: ETS domain-containing protein Elk-4 (430 aa).

Positions 5-85 (ITLWQFLLQL…NGQKFVYKFV (81 aa)) form a DNA-binding region, ETS. Basic and acidic residues predominate over residues 116 to 127 (SKDVEYGGKERP). The interval 116–138 (SKDVEYGGKERPPQPGAKTSSRN) is disordered. Residue lysine 166 forms a Glycyl lysine isopeptide (Lys-Gly) (interchain with G-Cter in SUMO2) linkage. Disordered regions lie at residues 245–279 (TTFNPTPPVPSTPLPLKEPPRTPSPPLSSNPDIDT) and 292–325 (PENLSLEPKNEDSALPEKDKTNNSSRSKKPKGLE). Residues 249 to 272 (PTPPVPSTPLPLKEPPRTPSPPLS) show a composition bias toward pro residues. Positions 299 to 312 (PKNEDSALPEKDKT) are enriched in basic and acidic residues.

This sequence belongs to the ETS family. Interacts with SIRT7. Lung and liver.

The protein localises to the nucleus. Its function is as follows. Involved in both transcriptional activation and repression. Interaction with SIRT7 leads to recruitment and stabilization of SIRT7 at promoters, followed by deacetylation of histone H3 at 'Lys-18' (H3K18Ac) and subsequent transcription repression. Forms a ternary complex with the serum response factor (SRF). Requires DNA-bound SRF for ternary complex formation and makes extensive DNA contacts to the 5'side of SRF, but does not bind DNA autonomously. The sequence is that of ETS domain-containing protein Elk-4 (Elk4) from Mus musculus (Mouse).